The following is a 63-amino-acid chain: DNA-directed RNA polymerase 7 kDa subunit (63 aa).

This sequence belongs to the poxviridae DNA-directed RNA polymerase 7 kDa subunit family. The DNA-dependent RNA polymerase used for intermediate and late genes expression consists of eight subunits 147 kDa, 133 kDa, 35 kDa, 30 kDa, 22 kDa, 19 kDa, 18 kDa and 7 kDa totalling more than 500 kDa in mass. The same holoenzyme, with the addition of the transcription-specificity factor RAP94, is used for early gene expression.

The protein resides in the virion. The enzyme catalyses RNA(n) + a ribonucleoside 5'-triphosphate = RNA(n+1) + diphosphate. Functionally, part of the DNA-dependent RNA polymerase which catalyzes the transcription of viral DNA into RNA using the four ribonucleoside triphosphates as substrates. Responsible for the transcription of early, intermediate and late genes. DNA-dependent RNA polymerase associates with the early transcription factor (ETF) thereby allowing the early genes transcription. Late transcription, and probably also intermediate transcription, require newly synthesized RNA polymerase. In Homo sapiens (Human), this protein is DNA-directed RNA polymerase 7 kDa subunit (RPO7).